Here is a 550-residue protein sequence, read N- to C-terminus: Iduronate 2-sulfatase (550 aa).

An N-terminal signal peptide occupies residues 1 to 25 (MPPPRTGRGLLWLGLVLSSVCVALG). Positions 26–33 (SETQANST) are excised as a propeptide. D45, D46, and C84 together coordinate Ca(2+). Residue C84 is the Nucleophile of the active site. Residue C84 is modified to 3-oxoalanine (Cys). The N-linked (GlcNAc...) asparagine glycan is linked to N115. Residue H138 is part of the active site. The N-linked (GlcNAc...) asparagine glycan is linked to N144. Residues C171 and C184 are joined by a disulfide bond. 3 N-linked (GlcNAc...) asparagine glycosylation sites follow: N246, N280, and N325. 2 residues coordinate Ca(2+): D334 and H335. A disulfide bridge links C422 with C432. 2 N-linked (GlcNAc...) asparagine glycosylation sites follow: N513 and N537.

This sequence belongs to the sulfatase family. As to quaternary structure, monomer. The 58-kDa mature form is composed of two chains resulting from proteolitic processing, the 42-kDa chain and the 14-kDa chain that remain stably associated and form the 58-kDa intermediate form which is enzymatically active. Requires Ca(2+) as cofactor. In terms of processing, synthesized as a 75-kDa precursor form in the endoplasmic reticulum (ER), and then processed by proteolytic cleavage through various intermediates to yield a 55-kDa mature form, with the release of an 18 kDa polypeptide. Post-translationally, the conversion to 3-oxoalanine (also known as C-formylglycine, FGly), of a serine or cysteine residue in prokaryotes and of a cysteine residue in eukaryotes, is critical for catalytic activity. In terms of tissue distribution, liver, kidney, lung, and placenta.

The protein resides in the lysosome. The catalysed reaction is Hydrolysis of the 2-sulfate groups of the L-iduronate 2-sulfate units of dermatan sulfate, heparan sulfate and heparin.. Functionally, lysosomal enzyme involved in the degradation pathway of dermatan sulfate and heparan sulfate. This chain is Iduronate 2-sulfatase (IDS), found in Homo sapiens (Human).